A 431-amino-acid polypeptide reads, in one-letter code: Serine hydroxymethyltransferase 1 (431 aa).

(6S)-5,6,7,8-tetrahydrofolate-binding positions include L127 and 131 to 133 (GHL). K236 carries the post-translational modification N6-(pyridoxal phosphate)lysine. (6S)-5,6,7,8-tetrahydrofolate is bound at residue E252.

The protein belongs to the SHMT family. Homodimer. It depends on pyridoxal 5'-phosphate as a cofactor.

It localises to the cytoplasm. It carries out the reaction (6R)-5,10-methylene-5,6,7,8-tetrahydrofolate + glycine + H2O = (6S)-5,6,7,8-tetrahydrofolate + L-serine. Its pathway is one-carbon metabolism; tetrahydrofolate interconversion. It participates in amino-acid biosynthesis; glycine biosynthesis; glycine from L-serine: step 1/1. In terms of biological role, catalyzes the reversible interconversion of serine and glycine with tetrahydrofolate (THF) serving as the one-carbon carrier. This reaction serves as the major source of one-carbon groups required for the biosynthesis of purines, thymidylate, methionine, and other important biomolecules. Also exhibits THF-independent aldolase activity toward beta-hydroxyamino acids, producing glycine and aldehydes, via a retro-aldol mechanism. The chain is Serine hydroxymethyltransferase 1 from Rhizobium meliloti (strain 1021) (Ensifer meliloti).